The following is a 156-amino-acid chain: Ribonuclease pancreatic (156 aa).

Positions 1-28 are cleaved as a signal peptide; sequence MALEKSLALLPLLVLVLLVLGWVQPSLG. Basic and acidic residues predominate over residues 33 to 43; it reads AQKFQRQHMDS. The interval 33-52 is disordered; sequence AQKFQRQHMDSDGSPSSNPT. Substrate contacts are provided by Lys-35 and Arg-38. The Proton acceptor role is filled by His-40. Cystine bridges form between Cys-54/Cys-112, Cys-68/Cys-123, Cys-86/Cys-138, and Cys-93/Cys-100. Asn-62 carries an N-linked (GlcNAc...) asparagine glycan. Substrate is bound by residues 69-73, Lys-94, and Arg-113; that span reads KPVNT. N-linked (GlcNAc...) asparagine glycosylation occurs at Asn-116. Catalysis depends on His-147, which acts as the Proton donor.

Belongs to the pancreatic ribonuclease family. Monomer. Interacts with and forms tight 1:1 complexes with RNH1. Dimerization of two such complexes may occur. Interaction with RNH1 inhibits this protein.

The protein resides in the secreted. It carries out the reaction an [RNA] containing cytidine + H2O = an [RNA]-3'-cytidine-3'-phosphate + a 5'-hydroxy-ribonucleotide-3'-[RNA].. The catalysed reaction is an [RNA] containing uridine + H2O = an [RNA]-3'-uridine-3'-phosphate + a 5'-hydroxy-ribonucleotide-3'-[RNA].. In terms of biological role, endonuclease that catalyzes the cleavage of RNA on the 3' side of pyrimidine nucleotides. Acts on single-stranded and double-stranded RNA. This Saguinus oedipus (Cotton-top tamarin) protein is Ribonuclease pancreatic (RNASE1).